A 449-amino-acid chain; its full sequence is UNC93-like protein MFSD11 (449 aa).

A helical transmembrane segment spans residues leucine 8–cysteine 28. The N-linked (GlcNAc...) asparagine glycan is linked to asparagine 40. 5 helical membrane-spanning segments follow: residues alanine 53–valine 73, glycine 74–isoleucine 94, proline 96–tryptophan 116, isoleucine 138–tryptophan 158, and arginine 170–isoleucine 190. The residue at position 204 (serine 204) is a Phosphoserine. 6 consecutive transmembrane segments (helical) span residues methionine 239–valine 259, leucine 277–glycine 297, proline 309–methionine 329, phenylalanine 359–leucine 379, alanine 385–tyrosine 405, and leucine 410–phenylalanine 430.

The protein belongs to the unc-93 family.

The protein resides in the membrane. The chain is UNC93-like protein MFSD11 (MFSD11) from Macaca fascicularis (Crab-eating macaque).